Here is a 229-residue protein sequence, read N- to C-terminus: Uracil-DNA glycosylase (229 aa).

Residue aspartate 64 is the Proton acceptor of the active site.

It belongs to the uracil-DNA glycosylase (UDG) superfamily. UNG family.

Its subcellular location is the cytoplasm. The enzyme catalyses Hydrolyzes single-stranded DNA or mismatched double-stranded DNA and polynucleotides, releasing free uracil.. Functionally, excises uracil residues from the DNA which can arise as a result of misincorporation of dUMP residues by DNA polymerase or due to deamination of cytosine. This chain is Uracil-DNA glycosylase, found in Salmonella choleraesuis (strain SC-B67).